A 150-amino-acid polypeptide reads, in one-letter code: Large ribosomal subunit protein bL9 (150 aa).

It belongs to the bacterial ribosomal protein bL9 family.

Functionally, binds to the 23S rRNA. This Thioalkalivibrio sulfidiphilus (strain HL-EbGR7) protein is Large ribosomal subunit protein bL9.